We begin with the raw amino-acid sequence, 159 residues long: Small heat shock protein hspM (159 aa).

The 159-residue stretch at 1–159 folds into the sHSP domain; that stretch reads MFVLNFELAG…LSNNIKIQIN (159 aa). The disordered stretch occupies residues 35–101; the sequence is MNNNNKNNLQ…NNNNKSSKTN (67 aa). Low complexity-rich tracts occupy residues 36–46 and 61–95; these read NNNNKNNLQIN and SSSS…NNNN.

The protein belongs to the small heat shock protein (HSP20) family.

The sequence is that of Small heat shock protein hspM (hspM) from Dictyostelium discoideum (Social amoeba).